The following is a 222-amino-acid chain: Latexin (222 aa).

The region spanning 1–97 (MEIPPTHYAA…NFTFEGEIGK (97 aa)) is the Cystatin LXN-type 1 domain. At K55 the chain carries N6-acetyllysine. The alpha-helical linker stretch occupies residues 98-117 (NPDEEDNTFYQSLMSLKRPL). In terms of domain architecture, Cystatin LXN-type 2 spans 118-222 (EAQDIPDNFG…SRLPKEGQAE (105 aa)).

This sequence belongs to the protease inhibitor I47 (latexin) family. As to expression, highly enriched in macrophages.

Its subcellular location is the cytoplasm. Functionally, hardly reversible, non-competitive, and potent inhibitor of CPA1, CPA2 and CPA4. May play a role in inflammation. The chain is Latexin (Lxn) from Mus musculus (Mouse).